A 97-amino-acid polypeptide reads, in one-letter code: Plasmid stability protein StbC (97 aa).

Its function is as follows. Involved in plasmid stability. This chain is Plasmid stability protein StbC (stbC), found in Pseudomonas syringae pv. tomato (strain ATCC BAA-871 / DC3000).